We begin with the raw amino-acid sequence, 390 residues long: Two-component response regulator ORR29 (390 aa).

Positions 13-130 (SAMVIDEDKC…TIKNLWQYVD (118 aa)) constitute a Response regulatory domain. The residue at position 65 (aspartate 65) is a 4-aspartylphosphate. Residues 169–226 (KKYYLMWTPHLQKKFLHALQILGKDASPKNIKKIMGVDNIDCRQIAAHLQKHRLRLTK) constitute a DNA-binding region (myb-like GARP). 2 disordered regions span residues 233 to 271 (FTTD…QPTE) and 303 to 339 (SKHS…SGDH). Over residues 257 to 271 (NASTLQPRSNTQPTE) the composition is skewed to polar residues.

This sequence belongs to the ARR family. Type-B subfamily. Two-component system major event consists of a His-to-Asp phosphorelay between a sensor histidine kinase (HK) and a response regulator (RR). In plants, the His-to-Asp phosphorelay involves an additional intermediate named Histidine-containing phosphotransfer protein (HPt). This multistep phosphorelay consists of a His-Asp-His-Asp sequential transfer of a phosphate group between first a His and an Asp of the HK protein, followed by the transfer to a conserved His of the HPt protein and finally the transfer to an Asp in the receiver domain of the RR protein.

The protein localises to the nucleus. Its function is as follows. Transcriptional activator that binds specific DNA sequence. Functions as a response regulator involved in His-to-Asp phosphorelay signal transduction system. Phosphorylation of the Asp residue in the receiver domain activates the ability of the protein to promote the transcription of target genes. May directly activate some type-A response regulators in response to cytokinins. The chain is Two-component response regulator ORR29 from Oryza sativa subsp. indica (Rice).